We begin with the raw amino-acid sequence, 328 residues long: tRNA uridine(34) hydroxylase (328 aa).

The Rhodanese domain maps to 130-224 (LDKDTVVLDT…YGKDPEVQGE (95 aa)). C184 serves as the catalytic Cysteine persulfide intermediate.

Belongs to the TrhO family.

It catalyses the reaction uridine(34) in tRNA + AH2 + O2 = 5-hydroxyuridine(34) in tRNA + A + H2O. Its function is as follows. Catalyzes oxygen-dependent 5-hydroxyuridine (ho5U) modification at position 34 in tRNAs. In Streptococcus pneumoniae (strain Hungary19A-6), this protein is tRNA uridine(34) hydroxylase.